Here is a 297-residue protein sequence, read N- to C-terminus: MPFVQFPNLFEISKFARQGKTVSELKCEVWTDLLSYLRTGLPTGLLSDFAEHHELNQLQAFTAVQFDEPCFVLPARAAIIVYCPEQDDMLSGVFEVDATGKRTFVRTSNTDIIGSAKSDVSGGKQIQSVGVAQGLETVMQMMDYILIQFHVQFGSFTDIGHFGMMRDAIQLYGTCACPFLLSLARFSTALSYLNAKLPSIVGLHYSGEPTTLGGIITRGVNLSAREAYFSKKYDPAQSLVASAFFTVKTSASGATVIEKMSSDIGLVYHMNRAAAVKVVSSRIGRLGEVANFGDDAE.

The chain is Non-structural protein VP10 from Oryza latifolia (Indian wild rice).